Consider the following 558-residue polypeptide: Ribonuclease J (558 aa).

The Zn(2+) site is built by histidine 81, histidine 83, aspartate 85, histidine 86, histidine 148, and aspartate 170. 371–375 (HVSGH) lines the substrate pocket. Position 397 (histidine 397) interacts with Zn(2+).

This sequence belongs to the metallo-beta-lactamase superfamily. RNA-metabolizing metallo-beta-lactamase-like family. Bacterial RNase J subfamily. Homodimer, may be a subunit of the RNA degradosome. It depends on Zn(2+) as a cofactor.

The protein resides in the cytoplasm. Its function is as follows. An RNase that has 5'-3' exonuclease and possibly endoonuclease activity. Involved in maturation of rRNA and in some organisms also mRNA maturation and/or decay. The protein is Ribonuclease J of Mycobacterium tuberculosis (strain CDC 1551 / Oshkosh).